Here is a 297-residue protein sequence, read N- to C-terminus: 2,3,4,5-tetrahydropyridine-2,6-dicarboxylate N-succinyltransferase (297 aa).

Asp-148 and Glu-165 together coordinate Mg(2+). The active-site Acyl-anhydride intermediate is Glu-181. Succinyl-CoA-binding positions include Arg-183, Gly-198, Ser-201, Ala-224, 239–240, Gly-247, Lys-258, and 271–274; these read EA and RRDS.

The protein belongs to the type 2 tetrahydrodipicolinate N-succinyltransferase family. Homotrimer.

The protein localises to the cytoplasm. It carries out the reaction (S)-2,3,4,5-tetrahydrodipicolinate + succinyl-CoA + H2O = (S)-2-succinylamino-6-oxoheptanedioate + CoA. Its pathway is amino-acid biosynthesis; L-lysine biosynthesis via DAP pathway; LL-2,6-diaminopimelate from (S)-tetrahydrodipicolinate (succinylase route): step 1/3. Functionally, catalyzes the conversion of the cyclic tetrahydrodipicolinate (THDP) into the acyclic N-succinyl-L-2-amino-6-oxopimelate using succinyl-CoA. This is 2,3,4,5-tetrahydropyridine-2,6-dicarboxylate N-succinyltransferase from Corynebacterium glutamicum (strain ATCC 13032 / DSM 20300 / JCM 1318 / BCRC 11384 / CCUG 27702 / LMG 3730 / NBRC 12168 / NCIMB 10025 / NRRL B-2784 / 534).